The sequence spans 157 residues: Protein MG115 homolog (157 aa).

It belongs to the CinA family.

The chain is Protein MG115 homolog from Mycoplasma pneumoniae (strain ATCC 29342 / M129 / Subtype 1) (Mycoplasmoides pneumoniae).